The chain runs to 286 residues: Ribosomal RNA small subunit methyltransferase H (286 aa).

S-adenosyl-L-methionine-binding positions include 30 to 32 (GGH), aspartate 49, phenylalanine 88, aspartate 97, and glutamine 104. Positions 260 to 286 (HPLQPSDEESFNNPASRSAKLRALEMR) are disordered.

The protein belongs to the methyltransferase superfamily. RsmH family.

It localises to the cytoplasm. It carries out the reaction cytidine(1402) in 16S rRNA + S-adenosyl-L-methionine = N(4)-methylcytidine(1402) in 16S rRNA + S-adenosyl-L-homocysteine + H(+). Its function is as follows. Specifically methylates the N4 position of cytidine in position 1402 (C1402) of 16S rRNA. The chain is Ribosomal RNA small subunit methyltransferase H from Solibacter usitatus (strain Ellin6076).